The chain runs to 186 residues: Zinc finger AN1 domain-containing stress-associated protein 12 (186 aa).

2 consecutive AN1-type zinc fingers follow at residues 10 to 58 and 97 to 147; these read PDLG…HGSR and KKKK…INTA. 16 residues coordinate Zn(2+): cysteine 16, cysteine 21, cysteine 31, cysteine 34, cysteine 39, histidine 42, histidine 48, cysteine 50, cysteine 103, cysteine 108, cysteine 120, cysteine 123, cysteine 128, histidine 131, histidine 137, and cysteine 139. Residues 167 to 186 are disordered; it reads KGCGRGSSVSSKSSPSVRSF. Positions 172–186 are enriched in low complexity; that stretch reads GSSVSSKSSPSVRSF.

Functionally, may be involved in environmental stress response. In Arabidopsis thaliana (Mouse-ear cress), this protein is Zinc finger AN1 domain-containing stress-associated protein 12 (SAP12).